We begin with the raw amino-acid sequence, 91 residues long: HssA/B-like protein 52 (91 aa).

2 disordered regions span residues 1-20 (MTLF…SKSS) and 72-91 (GGCG…CCGI).

The protein belongs to the hssA/B family.

This Dictyostelium discoideum (Social amoeba) protein is HssA/B-like protein 52 (hssl52).